We begin with the raw amino-acid sequence, 297 residues long: MKRPDYRTLQALDAVIRERGFERAAQKLCITQSAVSQRIKQLENMFGQPLLVRTVPPRPTEQGQKLLALLRQVELLEEEWLGDEQTGSTPLLLSLAVNADSLATWLLPALAPVLADSPIRLNLQVEDETRTQERLRRGEVVGAVSIQHQALPSCLVDKLGALDYLFVSSKPFAEKYFPNGVTRSALLKAPVVAFDHLDDMHQAFLQQNFDLPPGSVPCHIVNSSEAFVQLARQGTTCCMIPHLQIEKELASGELIDLTPGLFQRRMLYWHRFAPESRMMRKVTDALLDYGHKVLRQD.

Residues 4-60 (PDYRTLQALDAVIRERGFERAAQKLCITQSAVSQRIKQLENMFGQPLLVRTVPPRPT) form the HTH lysR-type domain. The H-T-H motif DNA-binding region spans 21 to 40 (FERAAQKLCITQSAVSQRIK).

Belongs to the LysR transcriptional regulatory family. In terms of assembly, homodimer.

Controls the transcription of genes involved in arginine and lysine metabolism. The sequence is that of HTH-type transcriptional regulator ArgP from Escherichia coli O127:H6 (strain E2348/69 / EPEC).